We begin with the raw amino-acid sequence, 210 residues long: Eukaryotic translation initiation factor 2 subunit gamma (210 aa).

Residues 1 to 196 (IGHVAHGKST…HLVETITPPR (196 aa)) form the tr-type G domain. Residues 2–9 (GHVAHGKS) are G1. Residue 5–10 (AHGKST) coordinates GTP. The G2 stretch occupies residues 30-34 (NITIK). Residues 85-88 (DCPG) are G3. Residues 141–144 (NKID) and 174–176 (SAI) contribute to the GTP site. The G4 stretch occupies residues 141 to 144 (NKID). Residues 174 to 176 (SAI) form a G5 region.

Belongs to the TRAFAC class translation factor GTPase superfamily. Classic translation factor GTPase family. EIF2G subfamily. As to quaternary structure, eukaryotic translation initiation factor 2 eIF2 is a heterotrimeric complex composed of an alpha, a beta and a gamma subunit. The factors eIF-1, eIF-2, eIF-3, TIF5/eIF-5 and methionyl-tRNAi form a multifactor complex (MFC) that may bind to the 40S ribosome.

It is found in the cytoplasm. The protein localises to the cytosol. The catalysed reaction is GTP + H2O = GDP + phosphate + H(+). Its function is as follows. As a subunit of eukaryotic initiation factor 2 eIF2, involved in the early steps of protein synthesis. In the presence of GTP, eIF-2 forms a ternary complex with initiator tRNA Met-tRNAi and then recruits the 40S ribosomal complex and initiation factors eIF-1, eIF-1A and eIF-3 to form the 43S pre-initiation complex (43S PIC), a step that determines the rate of protein translation. The 43S PIC binds to mRNA and scans downstream to the initiation codon, where it forms a 48S initiation complex by codon-anticodon base pairing. This leads to the displacement of eIF-1 to allow GTPase-activating protein (GAP) eIF-5-mediated hydrolysis of eIF2-bound GTP. Hydrolysis of GTP and release of Pi, which makes GTP hydrolysis irreversible, causes the release of the eIF-2-GDP binary complex from the 40S subunit, an event that is essential for the subsequent joining of the 60S ribosomal subunit to form an elongation-competent 80S ribosome. In order for eIF-2 to recycle and catalyze another round of initiation, the GDP bound to eIF-2 must be exchanged with GTP by way of a reaction catalyzed by GDP-GTP exchange factor (GEF) eIF-2B. This is Eukaryotic translation initiation factor 2 subunit gamma from Spironucleus vortens.